The sequence spans 755 residues: MANGLKFSPRKTALALAVAVVCAWQSPVFAHGSEAHMVPLDKTLQEFGADVQWDDYAQMFTLIKDGAYVKVKPGAKTAIVNGKSLDLPVPVVMKEGKAWVSDTFINDVFQSGLDQTFQVEKRPHPLNSLSAAEISKAVTIVKAAPEFQPNTRFTEISLHEPDKAAVWAFALQGTPVDAPRTADVVMLDGKHVIEAVVDLQNKKILSWTPIKGAHGMVLLDDFVSVQNIINTSSEFAEVLKKHGITDPGKVVTTPLTVGFFDGKDGLQQDARLLKVVSYLDTGDGNYWAHPIENLVAVVDLEAKKIIKIEEGPVIPVPMEPRPYDGRDRNAPAVKPLEITEPEGKNYTITGDTIHWQNWDFHLRLNSRVGPILSTVTYNDNGTKRQVMYEGSLGGMIVPYGDPDVGWYFKAYLDSGDYGMGTLTSPIVRGKDAPSNAVLLDETIADYTGKPTTIPGAVAIFERYAGPEYKHLEMGKPNVSTERRELVVRWISTVGNYDYIFDWVFHDNGTIGIDAGATGIEAVKGVLAKTMHDPSAKEDTRYGTLIDHNIVGTTHQHIYNFRLDLDVDGENNTLVAMDPEVKPNTAGGPRTSTMQVNQYTIDSEQKAAQKFDPGTIRLLSNTSKENRMGNPVSYQIIPYAGGTHPAATGAKFAPDEWIYHRLSFMDKQLWVTRYHPTERYPEGKYPNRSAHDTGLGQYAKDDESLTNHDDVVWITTGTTHVARAEEWPIMPTEWALALLKPWNFFDETPTLGEKKK.

An N-terminal signal peptide occupies residues Met1 to Ala30. Residues Tyr411 to Leu422 and Val493 to Tyr498 each bind substrate. Residue Asp413 is the Proton acceptor of the active site. Tyr496 serves as the catalytic Schiff-base intermediate with substrate; via topaquinone. Residue Tyr496 is modified to 2',4',5'-topaquinone. Residues His554 and His556 each contribute to the Cu cation site. 8 residues coordinate Ca(2+): Asp563, Leu564, Asp565, Glu603, Tyr697, Asp700, Glu702, and Asp708. Asp563 contributes to the Mn(2+) binding site. A Mn(2+)-binding site is contributed by Asp565. Position 708 (Asp708) interacts with Mn(2+). His719 contributes to the Cu cation binding site.

Belongs to the copper/topaquinone oxidase family. In terms of assembly, homodimer. Cu cation is required as a cofactor. The cofactor is Zn(2+). It depends on Ca(2+) as a cofactor. L-topaquinone serves as cofactor. Requires Mn(2+) as cofactor. Topaquinone (TPQ) is generated by copper-dependent autoxidation of a specific tyrosyl residue.

The protein resides in the periplasm. It catalyses the reaction a primary methyl amine + O2 + H2O = an aldehyde + H2O2 + NH4(+). Functionally, active on tyramine, tryptamine, beta-phenethylamine and dopamine. This is Primary amine oxidase (maoA) from Klebsiella aerogenes (Enterobacter aerogenes).